The following is a 443-amino-acid chain: D-serine dehydratase (443 aa).

Lys-118 is modified (N6-(pyridoxal phosphate)lysine).

It belongs to the serine/threonine dehydratase family. DsdA subfamily. Monomer. Requires pyridoxal 5'-phosphate as cofactor.

It catalyses the reaction D-serine = pyruvate + NH4(+). The sequence is that of D-serine dehydratase from Escherichia coli O17:K52:H18 (strain UMN026 / ExPEC).